The chain runs to 688 residues: DNA ligase (688 aa).

Residues 51–55 (DSEYD), 100–101 (SL), and glutamate 129 each bind NAD(+). Lysine 131 functions as the N6-AMP-lysine intermediate in the catalytic mechanism. Residues arginine 152, glutamate 189, lysine 308, and lysine 332 each coordinate NAD(+). 4 residues coordinate Zn(2+): cysteine 426, cysteine 429, cysteine 444, and cysteine 450. Residues 609–688 (ADEQPLKGQT…DELLALLANS (80 aa)) enclose the BRCT domain.

Belongs to the NAD-dependent DNA ligase family. LigA subfamily. It depends on Mg(2+) as a cofactor. Mn(2+) is required as a cofactor.

It catalyses the reaction NAD(+) + (deoxyribonucleotide)n-3'-hydroxyl + 5'-phospho-(deoxyribonucleotide)m = (deoxyribonucleotide)n+m + AMP + beta-nicotinamide D-nucleotide.. Functionally, DNA ligase that catalyzes the formation of phosphodiester linkages between 5'-phosphoryl and 3'-hydroxyl groups in double-stranded DNA using NAD as a coenzyme and as the energy source for the reaction. It is essential for DNA replication and repair of damaged DNA. This Shewanella sp. (strain MR-7) protein is DNA ligase.